Consider the following 145-residue polypeptide: UPF0260 protein VS_0923 (145 aa).

It belongs to the UPF0260 family.

The polypeptide is UPF0260 protein VS_0923 (Vibrio atlanticus (strain LGP32) (Vibrio splendidus (strain Mel32))).